We begin with the raw amino-acid sequence, 94 residues long: Small ribosomal subunit protein uS17 (94 aa).

It belongs to the universal ribosomal protein uS17 family. In terms of assembly, part of the 30S ribosomal subunit.

Its function is as follows. One of the primary rRNA binding proteins, it binds specifically to the 5'-end of 16S ribosomal RNA. In Deinococcus geothermalis (strain DSM 11300 / CIP 105573 / AG-3a), this protein is Small ribosomal subunit protein uS17.